Reading from the N-terminus, the 250-residue chain is Cell division protein ZapD (250 aa).

It belongs to the ZapD family. In terms of assembly, interacts with FtsZ.

It is found in the cytoplasm. Functionally, cell division factor that enhances FtsZ-ring assembly. Directly interacts with FtsZ and promotes bundling of FtsZ protofilaments, with a reduction in FtsZ GTPase activity. The chain is Cell division protein ZapD from Photorhabdus laumondii subsp. laumondii (strain DSM 15139 / CIP 105565 / TT01) (Photorhabdus luminescens subsp. laumondii).